Reading from the N-terminus, the 803-residue chain is Cation channel sperm-associated auxiliary subunit delta (803 aa).

The first 15 residues, 1–15, serve as a signal peptide directing secretion; sequence MLMLMLAAVATVVRA. Topologically, residues 16-720 are extracellular; that stretch reads QTVCRFRTVR…ALPVAEFRPM (705 aa). Intrachain disulfides connect cysteine 19–cysteine 365, cysteine 55–cysteine 142, cysteine 141–cysteine 148, cysteine 383–cysteine 492, cysteine 506–cysteine 698, cysteine 521–cysteine 568, and cysteine 620–cysteine 648. N-linked (GlcNAc...) asparagine glycans are attached at residues asparagine 226, asparagine 418, asparagine 436, asparagine 468, asparagine 534, asparagine 545, and asparagine 626. Residues 721–742 traverse the membrane as a helical segment; it reads TSILLMVTVTLFTMWLAYAIPK. Topologically, residues 743-803 are cytoplasmic; sequence QLRTERGRRL…QIGKKPDIKK (61 aa). The segment at 782-803 is disordered; the sequence is SRRVKDQPEKIPQIGKKPDIKK.

Belongs to the CATSPERD family. As to quaternary structure, component of the CatSper complex or CatSpermasome composed of the core pore-forming members CATSPER1, CATSPER2, CATSPER3 and CATSPER4 as well as auxiliary members CATSPERB, CATSPERG, CATSPERD, CATSPERE, CATSPERZ, C2CD6/CATSPERT, SLCO6C1, TMEM249, TMEM262 and EFCAB9. HSPA1 may be an additional auxiliary complex member. The core complex members CATSPER1, CATSPER2, CATSPER3 and CATSPER4 form a heterotetrameric channel. The auxiliary CATSPERB, CATSPERG, CATSPERD and CATSPERE subunits form a pavilion-like structure over the pore which stabilizes the complex through interactions with CATSPER4, CATSPER3, CATSPER1 and CATSPER2 respectively. SLCO6C1 interacts with CATSPERE and TMEM262/CATSPERH interacts with CATSPERB, further stabilizing the complex. C2CD6/CATSPERT interacts at least with CATSPERD and is required for targeting the CatSper complex in the flagellar membrane.

The protein resides in the cell projection. Its subcellular location is the cilium. It is found in the flagellum membrane. Functionally, auxiliary component of the CatSper complex, a complex involved in sperm cell hyperactivation. Sperm cell hyperactivation is needed for sperm motility which is essential late in the preparation of sperm for fertilization. Required for CATSPER1 stability before intraflagellar transport and/or incorporation of the CatSper complex channel into the flagellar membrane. This chain is Cation channel sperm-associated auxiliary subunit delta, found in Rattus norvegicus (Rat).